Here is a 162-residue protein sequence, read N- to C-terminus: Peptidyl-prolyl cis-trans isomerase-like 1 (162 aa).

The region spanning Met1–Val155 is the PPIase cyclophilin-type domain.

This sequence belongs to the cyclophilin-type PPIase family. PPIL1 subfamily.

It carries out the reaction [protein]-peptidylproline (omega=180) = [protein]-peptidylproline (omega=0). Functionally, PPIases accelerate the folding of proteins. It catalyzes the cis-trans isomerization of proline imidic peptide bonds in oligopeptides. The sequence is that of Peptidyl-prolyl cis-trans isomerase-like 1 (cyp1) from Emericella nidulans (strain FGSC A4 / ATCC 38163 / CBS 112.46 / NRRL 194 / M139) (Aspergillus nidulans).